A 140-amino-acid polypeptide reads, in one-letter code: Small ribosomal subunit protein uS19 (140 aa).

Belongs to the universal ribosomal protein uS19 family.

Its function is as follows. Protein S19 forms a complex with S13 that binds strongly to the 16S ribosomal RNA. This Sulfurisphaera tokodaii (strain DSM 16993 / JCM 10545 / NBRC 100140 / 7) (Sulfolobus tokodaii) protein is Small ribosomal subunit protein uS19 (rps19).